Reading from the N-terminus, the 442-residue chain is MSEKKRRGGAGAGAASGSASKKPRVSTAASYAESLRSKLRPDASILATLRSLASACSKSKPAGSSSSSSSASKALAAEDDPAASYIVVADQDSASVTSRINRLVLAAARSILSGRGFSFAVPSRAASNQVYLPDLDRIVLVRRESARPFANVATARKATITARVLSLVHAVLRRGIHVTKRDLFYTDVKLFGDQAQSDAVLDDVSCMLGCTRSSLHVVASEKGVVVGRLTFADDGDRIDCTRMGVGGKAIPPNIDRVSGIESDALFILLVEKDAAFMRLAEDRFYNRFPCIILTAKGQPDVATRLFLRRLKVELKLPVLALVDSDPYGLKILSVYMCGSKNMSYDSANLTTPDIKWLGVRPSDLDKYRVPEQCRLPMTDHDIKVGKELLEEDFVKQNEGWVKELETMLRTRQKAEIQALSSFGFQYLTEVYLPLKLQQQDWI.

A disordered region spans residues 1–34 (MSEKKRRGGAGAGAASGSASKKPRVSTAASYAES). Residues 91–224 (QDSASVTSRI…LHVVASEKGV (134 aa)) enclose the Topo IIA-type catalytic domain. Catalysis depends on tyrosine 185, which acts as the O-(5'-phospho-DNA)-tyrosine intermediate. Mg(2+) contacts are provided by glutamate 271 and aspartate 323.

Belongs to the TOP6A family. As to quaternary structure, homodimer. Heterotetramer of two TOP6A and two TOP6B subunits. Interacts with TOP6B. Requires Mg(2+) as cofactor. As to expression, highly expressed in flowers before pollination. Expressed in roots and shoots.

It localises to the nucleus. The enzyme catalyses ATP-dependent breakage, passage and rejoining of double-stranded DNA.. Functionally, component of the DNA topoisomerase VI involved in chromatin organization and progression of endoreduplication cycles. Relaxes both positive and negative superturns and exhibits a strong decatenase activity. May be involved in cell proliferation and stress tolerance. The polypeptide is DNA topoisomerase 6 subunit A3 (Oryza sativa subsp. indica (Rice)).